The chain runs to 238 residues: Probable transcriptional regulatory protein STER_0242 (238 aa).

The protein belongs to the TACO1 family. YeeN subfamily.

It localises to the cytoplasm. The chain is Probable transcriptional regulatory protein STER_0242 from Streptococcus thermophilus (strain ATCC BAA-491 / LMD-9).